Reading from the N-terminus, the 441-residue chain is MGLNDSLLDMQLLTIGINHHTAPVALRERVAFPLEQIKPALSTFKSVFLGHPAPNAPEAAILSTCNRTELYCATNDRAARDAAIRWMSDYHRIPADELAPHVYALPQSEAVRHAFRVASGLDSMVLGETQILGQMKNAVRTASEAGSLGTYLNQLFQRTFAVAKEVRGTTEIGAQSVSMAAAAVRLAQRIFEQVAQQRVLFIGAGEMIELCATHFAAQGPRELVVANRTAERGAKLAERFGGRAMPLADLPARMHEFDIIVSCTASTLPIIGLGAVERAVKARRHRPIFMVDLAVPRDIEPEVGKLKDVFLYTVDDLGAIVREGNASRQAAVAQAEAIIETRVQNFMQWLDARSIVPVIRHMHTQADALRRAEVERARKMLARGDDPDAVLDALSQALTNKLIHGPTSALNRANGADRDSLIDLMRGFYQHAPRSSDTSDR.

Substrate-binding positions include 64 to 67 (TCNR), S123, 128 to 130 (ETQ), and Q134. Catalysis depends on C65, which acts as the Nucleophile. An NADP(+)-binding site is contributed by 203-208 (GAGEMI).

The protein belongs to the glutamyl-tRNA reductase family. In terms of assembly, homodimer.

It catalyses the reaction (S)-4-amino-5-oxopentanoate + tRNA(Glu) + NADP(+) = L-glutamyl-tRNA(Glu) + NADPH + H(+). It functions in the pathway porphyrin-containing compound metabolism; protoporphyrin-IX biosynthesis; 5-aminolevulinate from L-glutamyl-tRNA(Glu): step 1/2. Catalyzes the NADPH-dependent reduction of glutamyl-tRNA(Glu) to glutamate 1-semialdehyde (GSA). The chain is Glutamyl-tRNA reductase from Burkholderia pseudomallei (strain K96243).